Here is a 393-residue protein sequence, read N- to C-terminus: Bone morphogenetic protein 2 (393 aa).

An N-terminal signal peptide occupies residues 1 to 19 (MVAGTRCLLVLLLPQVLLG). The propeptide at 20-279 (GAAGLIPELG…GHPLHKREKR (260 aa)) is cleaved by PCSK5. Position 85 is a phosphoserine (Ser85). N-linked (GlcNAc...) asparagine glycans are attached at residues Asn133, Asn161, and Asn197. The interval 268–290 (GKGHPLHKREKRQAKHKQRKRLK) is disordered. Over residues 271–290 (HPLHKREKRQAKHKQRKRLK) the composition is skewed to basic residues. 3 disulfides stabilise this stretch: Cys293–Cys358, Cys322–Cys390, and Cys326–Cys392. Asn335 is a glycosylation site (N-linked (GlcNAc...) asparagine).

The protein belongs to the TGF-beta family. Homodimer; disulfide-linked. Interacts with SOSTDC1. Interacts with GREM2, RGMA, RGMB and RGMC. Interacts with ASPN. Interacts with MAFP5. Interacts with FBN1 (via N-terminal domain) and FBN2. Interacts with type I receptor BMPR1A. Interacts with type II receptor BMPR2. Interacts with SCUBE3. Interacts with TNFAIP6 (primarily via Link domain); this interaction is inhibited by hyaluronan. Interacts with ERFE. Interacts with BMPR1A/ALK3; the interaction may induce HAMP expression. Forms heterodimers with BMP6 in vitro; the heterodimer then binds to its receptor BMPR1A /ALK3 and may induce HAMP expression. Interacts with TGFBR3. Expressed in femur, calvaria, trachea, lung and ovary.

The protein localises to the secreted. Growth factor of the TGF-beta superfamily that plays essential roles in many developmental processes, including cardiogenesis, neurogenesis, and osteogenesis. Induces cartilage and bone formation. Initiates the canonical BMP signaling cascade by associating with type I receptor BMPR1A and type II receptor BMPR2. Once all three components are bound together in a complex at the cell surface, BMPR2 phosphorylates and activates BMPR1A. In turn, BMPR1A propagates signal by phosphorylating SMAD1/5/8 that travel to the nucleus and act as activators and repressors of transcription of target genes. Also acts to promote expression of HAMP, via the interaction with its receptor BMPR1A/ALK3. Can also signal through non-canonical pathways such as ERK/MAP kinase signaling cascade that regulates osteoblast differentiation. Also stimulates the differentiation of myoblasts into osteoblasts via the EIF2AK3-EIF2A-ATF4 pathway by stimulating EIF2A phosphorylation which leads to increased expression of ATF4 which plays a central role in osteoblast differentiation. Acts as a positive regulator of odontoblast differentiation during mesenchymal tooth germ formation, expression is repressed during the bell stage by MSX1-mediated inhibition of CTNNB1 signaling. This chain is Bone morphogenetic protein 2 (Bmp2), found in Rattus norvegicus (Rat).